The chain runs to 283 residues: Pantothenate synthetase (283 aa).

Residue 30–37 (MGNLHSGH) coordinates ATP. The Proton donor role is filled by His-37. Gln-61 is a (R)-pantoate binding site. Gln-61 provides a ligand contact to beta-alanine. 149–152 (GQKD) is a binding site for ATP. Gln-155 contributes to the (R)-pantoate binding site. ATP-binding positions include Val-178 and 186–189 (LSSR).

The protein belongs to the pantothenate synthetase family. Homodimer.

It localises to the cytoplasm. The enzyme catalyses (R)-pantoate + beta-alanine + ATP = (R)-pantothenate + AMP + diphosphate + H(+). It participates in cofactor biosynthesis; (R)-pantothenate biosynthesis; (R)-pantothenate from (R)-pantoate and beta-alanine: step 1/1. In terms of biological role, catalyzes the condensation of pantoate with beta-alanine in an ATP-dependent reaction via a pantoyl-adenylate intermediate. The chain is Pantothenate synthetase from Pseudomonas fluorescens (strain SBW25).